A 101-amino-acid chain; its full sequence is MISIIIAYATPEKQVEIPLTVEESCTLVVAVKRSGILQQFPEINLSQAIVGIHNKRTALDAGLRDDDRIEIYRPLTMDPKQARLLRAKRGKIRRMVRGEAG.

The protein belongs to the UPF0125 (RnfH) family.

This Coxiella burnetii (strain RSA 331 / Henzerling II) protein is Protein RnfH.